The chain runs to 397 residues: Multidrug resistance protein MdtH (397 aa).

Transmembrane regions (helical) follow at residues 11-31 (WFLA…MPMI), 32-52 (SLRF…ALGL), 71-91 (FGAR…FASL), 94-114 (AQSG…GCLF), 137-157 (LLMM…SWLL), 163-183 (YVCL…LLIL), 211-231 (LVLI…IFPI), 242-262 (AVGW…YPLA), 291-311 (FANT…GIVI), 340-360 (LALG…YAML), and 366-386 (LPWL…VNCF).

The protein belongs to the major facilitator superfamily. DHA1 family. MdtH (TC 2.A.1.2.21) subfamily.

The protein localises to the cell inner membrane. In Aeromonas hydrophila subsp. hydrophila (strain ATCC 7966 / DSM 30187 / BCRC 13018 / CCUG 14551 / JCM 1027 / KCTC 2358 / NCIMB 9240 / NCTC 8049), this protein is Multidrug resistance protein MdtH.